Here is a 738-residue protein sequence, read N- to C-terminus: Ethylene receptor (738 aa).

Transmembrane regions (helical) follow at residues 23 to 43, 54 to 74, and 92 to 112; these read ISDFFIALAYFSIPLELIYFV, VLVQFGAFIVLCGATHLINLW, and VLTAVVSCATALMLVHIIPDL. The Cu cation site is built by C65 and H69. The region spanning 158-307 is the GAF domain; sequence DRHTILKTTL…VVADQVAVAL (150 aa). One can recognise a Histidine kinase domain in the interval 350 to 589; the sequence is VMNHEMRTPM…IFIVKLGFAE (240 aa). A Phosphohistidine; by autocatalysis modification is found at H353. A Response regulatory domain is found at 612 to 729; that stretch reads PGLKVLVMDD…KMRSVLSELL (118 aa). 4-aspartylphosphate is present on D660.

This sequence belongs to the ethylene receptor family. In terms of assembly, homodimer; disulfide-linked. Cu cation serves as cofactor. In terms of processing, activation probably requires a transfer of a phosphate group between a His in the transmitter domain and an Asp of the receiver domain.

It localises to the endoplasmic reticulum membrane. The catalysed reaction is ATP + protein L-histidine = ADP + protein N-phospho-L-histidine.. Functionally, may act early in the ethylene signal transduction pathway, possibly as an ethylene receptor, or as a regulator of the pathway. The chain is Ethylene receptor (ETR1) from Prunus persica (Peach).